The primary structure comprises 548 residues: Undecaprenyl phosphate-alpha-4-amino-4-deoxy-L-arabinose arabinosyl transferase 1 (548 aa).

12 helical membrane-spanning segments follow: residues 11-31 (WLLFFLFILLTYFIPLETRLL), 89-109 (IVVVTSTLLTGWLIYKAAMVV), 114-134 (ALAFNAMTVFLSSFLVLAIGT), 137-157 (ILDPIVTLFVTAAMYSFLVAL), 180-200 (FLTKGFIAVVLPALVFLVMAI), 214-234 (IALLALAITAGPWVITVALQA), 263-283 (FYIPIVILGVLPWLGFLFGAL), 292-312 (GTLYFLLWFTLFFAFFSASKG), 314-334 (LLTYMLPCFVPLSILIAHYIE), 347-367 (VNASINIAFGLMGISAVIYSL), 382-402 (KIVLAISGFLFWSVIGAGALF), and 405-425 (TQFLTMFCSIGLSLVIGYAIP).

Belongs to the glycosyltransferase 83 family.

The protein resides in the cell inner membrane. The catalysed reaction is 4-amino-4-deoxy-alpha-L-arabinopyranosyl di-trans,octa-cis-undecaprenyl phosphate + lipid IVA = lipid IIA + di-trans,octa-cis-undecaprenyl phosphate.. The protein operates within lipopolysaccharide metabolism; 4-amino-4-deoxy-beta-L-arabinose-lipid A biosynthesis. Its function is as follows. Catalyzes the transfer of the L-Ara4N moiety of the glycolipid undecaprenyl phosphate-alpha-L-Ara4N to lipid A. The modified arabinose is attached to lipid A and is required for resistance to polymyxin and cationic antimicrobial peptides. In Proteus mirabilis (strain HI4320), this protein is Undecaprenyl phosphate-alpha-4-amino-4-deoxy-L-arabinose arabinosyl transferase 1.